We begin with the raw amino-acid sequence, 421 residues long: Indole-3-pyruvate monooxygenase YUCCA8 (421 aa).

Residue 30 to 35 (GAGPSG) coordinates FAD. Position 201–206 (201–206 (GCGNSG)) interacts with NADP(+).

This sequence belongs to the FMO family. Requires FAD as cofactor. As to expression, expressed in organs undergoing active growth and cell division.

The protein resides in the endoplasmic reticulum. It catalyses the reaction indole-3-pyruvate + NADPH + O2 + H(+) = (indol-3-yl)acetate + CO2 + NADP(+) + H2O. In terms of biological role, involved in auxin biosynthesis. Converts the indole-3-pyruvic acid (IPA) produced by the TAA family to indole-3-acetic acid (IAA). Seems not able to use tryptamine (TAM) as substrate. Probably responsible for auxin biosynthesis in leaves and involved in the regulation of lateral leaf growth. Required for maintaining water homeostasis and an appropriate root to shoot ratio. Required for the inhibition of root growth by ethylene in etiolated seedlings. Functions downstream of the ethylene-response transcription factor EIL1. The sequence is that of Indole-3-pyruvate monooxygenase YUCCA8 from Oryza sativa subsp. indica (Rice).